A 143-amino-acid chain; its full sequence is Large ribosomal subunit protein uL11 (143 aa).

It belongs to the universal ribosomal protein uL11 family. In terms of assembly, part of the ribosomal stalk of the 50S ribosomal subunit. Interacts with L10 and the large rRNA to form the base of the stalk. L10 forms an elongated spine to which L12 dimers bind in a sequential fashion forming a multimeric L10(L12)X complex. Post-translationally, one or more lysine residues are methylated.

Forms part of the ribosomal stalk which helps the ribosome interact with GTP-bound translation factors. The sequence is that of Large ribosomal subunit protein uL11 from Nitrosomonas europaea (strain ATCC 19718 / CIP 103999 / KCTC 2705 / NBRC 14298).